The primary structure comprises 413 residues: Oxidoreductase vrtI (413 aa).

The Fe2OG dioxygenase domain occupies 235–341; sequence DAESLTTLSM…RYSIAYFLRA (107 aa). His262, Asp264, and His319 together coordinate Fe cation. Arg332 is a binding site for 2-oxoglutarate.

The protein belongs to the iron/ascorbate-dependent oxidoreductase family.

It participates in secondary metabolite biosynthesis; terpenoid biosynthesis. Its function is as follows. Oxidoreductase; part of the gene cluster that mediates the biosynthesis of viridicatumtoxin, a tetracycline-like fungal meroterpenoid with a unique, fused spirobicyclic ring system. The first step of the pathway is the production of the malonamoyl-CoA starter unit for the polyketide synthase vrtA. The aldolase vrtJ may be involved in the synthesis of the malonamate substrate for malonamoyl-CoA synthetase vrtB. The polyketide synthase vrtA then may utilize the malonamoyl-CoA starter unit, followed by sequential condensation of eight malonyl-CoA units to form the polyketide backbone. The cyclization of the last ring could be mediated by the lactamase-like protein vrtG. The proposed post-PKS tailoring steps are a hydroxylation at C5 catalyzed the cytochrome P450 monooxygenase vrtE, a hydroxylation at C12a catalyzed by VrtH and/or VrtI, and an O-methylation by the O-methyltransferase vrtF. VrtC is then proposed to catalyze the transfer of a geranyl group synthesized by vrtD to the aromatic C ring of the tetracyclic polyketide intermediate of viridicatumtoxin to yield previridicatumtoxin. Finally, the cytochrome P450 monooxygenase vrtK catalyzes the spirocyclization of the geranyl moiety of previridicatumtoxin to afford viridicatumtoxin. The chain is Oxidoreductase vrtI from Penicillium aethiopicum.